The sequence spans 615 residues: ATP-dependent zinc metalloprotease FtsH (615 aa).

At 1-8 the chain is on the cytoplasmic side; that stretch reads MAMNKDKP. The helical transmembrane segment at 9 to 29 threads the bilayer; that stretch reads WTLYLLAVGLAVLAAVQFGLF. The Periplasmic segment spans residues 30–104; that stretch reads SQPAVQAIPY…FSGVVEDNTV (75 aa). The helical transmembrane segment at 105–125 threads the bilayer; that stretch reads ATVMGALMPLLMLLALWYFLF. Residues 126-615 are Cytoplasmic-facing; the sequence is HGLGQKQGLG…ATYVLVDATK (490 aa). 198–205 contacts ATP; the sequence is GPPGTGKT. Residue His420 coordinates Zn(2+). Glu421 is a catalytic residue. Residues His424 and Asp497 each coordinate Zn(2+).

The protein in the central section; belongs to the AAA ATPase family. It in the C-terminal section; belongs to the peptidase M41 family. As to quaternary structure, homohexamer. Zn(2+) serves as cofactor.

It localises to the cell inner membrane. Functionally, acts as a processive, ATP-dependent zinc metallopeptidase for both cytoplasmic and membrane proteins. Plays a role in the quality control of integral membrane proteins. The protein is ATP-dependent zinc metalloprotease FtsH of Pseudomonas putida (strain ATCC 700007 / DSM 6899 / JCM 31910 / BCRC 17059 / LMG 24140 / F1).